A 760-amino-acid chain; its full sequence is E4 SUMO-protein ligase PIAL2 (760 aa).

The interacting domain (IND), required for interaction with MOM1 and PIAL1 stretch occupies residues 143–301; the sequence is IKSPGSTFSQ…GVIEASPDSD (159 aa). Residues 298–379 form an SP-RING-type zinc finger; the sequence is PDSDIIEGPS…MAKILKDVEH (82 aa). Positions 329, 331, 352, and 355 each coordinate Zn(2+). Basic and acidic residues predominate over residues 440-450; sequence GDNKVEDRKPC. 4 disordered regions span residues 440–471, 492–522, 631–657, and 699–760; these read GDNKVEDRKPCMSDAQGQSNNNNTNKHPSNDD, LGNTAPQPHQASNTGTGQQYSNLSQIPMSID, GVRGLTSSHASTSRQHPSGPTVQSVSR, and SQQS…GPTS. Polar residues-rich tracts occupy residues 492–518, 631–653, and 699–729; these read LGNTAPQPHQASNTGTGQQYSNLSQIP, GVRGLTSSHASTSRQHPSGPTVQ, and SQQSQTSTRLNSSQPVQTPSVQTSQAQSPFT.

This sequence belongs to the PIAL protein ligase family. As to quaternary structure, homodimer. Interacts with MOM1 and PIAL1 to form a high molecular mass complex which mediates transcriptional silencing at heterochromatin regions. As to expression, expressed in leaves, stems and flowers, and, at low levels, in siliques and old leaves.

Its subcellular location is the nucleus. Its pathway is protein modification; protein sumoylation. Together with MOM1 and PIAL1, regulates transcriptional gene silencing (TGS) independently of changes in DNA methylation. E4-type SUMO ligase that promotes SUMO chain formation in a SCE1-dependent manner and thus contributes to a pathway for proteolytic removal of sumoylation substrates. Involved in stress responses and sulfur metabolism. In Arabidopsis thaliana (Mouse-ear cress), this protein is E4 SUMO-protein ligase PIAL2.